The sequence spans 158 residues: Disease resistance response protein Pi49 (158 aa).

It belongs to the BetVI family.

In Pisum sativum (Garden pea), this protein is Disease resistance response protein Pi49 (DRR49A).